The primary structure comprises 81 residues: Putative membrane protein insertion efficiency factor (81 aa).

The disordered stretch occupies residues 61–81; it reads NDGGFDPVPPAPSSRTSSIAE.

This sequence belongs to the UPF0161 family.

It localises to the cell inner membrane. Its function is as follows. Could be involved in insertion of integral membrane proteins into the membrane. This is Putative membrane protein insertion efficiency factor from Pseudomonas putida (strain ATCC 700007 / DSM 6899 / JCM 31910 / BCRC 17059 / LMG 24140 / F1).